The sequence spans 223 residues: Urease subunit alpha (223 aa).

Positions 1-101 (MHFTQQQLQR…LVTIHEPIAN (101 aa)) are urease gamma. The tract at residues 102–223 (DDKIKAGEIF…LSKAKEKGFL (122 aa)) is urease beta.

The protein in the N-terminal section; belongs to the urease gamma subunit family. It in the C-terminal section; belongs to the urease beta subunit family. As to quaternary structure, heterohexamer of 3 UreA (alpha) and 3 UreB (beta) subunits.

It is found in the cytoplasm. It carries out the reaction urea + 2 H2O + H(+) = hydrogencarbonate + 2 NH4(+). It participates in nitrogen metabolism; urea degradation; CO(2) and NH(3) from urea (urease route): step 1/1. The polypeptide is Urease subunit alpha (Campylobacter lari).